A 465-amino-acid chain; its full sequence is MSEPEIKVGKTSSALFDRAPMAPSMPGGRASSSHGLSVTDDIDARIWERIKDHPCFSEXAHHYFARMHXXVAPACNIQCNYCNRKYDCTNESCPXVASVKLTPDQALRKVLAVASKVPELSVIXVAGPGDACYDWRKTVATFEGVAREIPDMKLCISTNGLALPDHVDELADMNIDHVTITINMVDPEIGAKIYPWIIHGHRRYTGIAAAGILHERQMLGLELLTKRGILTKINSVMIPGVNDTHLVEVNRWIRDRGAFMHNVVPLISKPSHGTYYGLTGQRCPEPFELKALQDCLDGNIKLMRHCQQCRADAIGLLGDDREREFALDQISTKVEFDTSKREAYRKLVQHERGDQLAAKLDANKAVKSLGSSGTLAVAVATKGGGRINEHFGQARELQVYAVSLKGINLVGHXXVEQYCLGGIGEKATLDHTIVALDGIDILLSSKIGDCPKKRLAETGVRASDA.

Residues 1-36 (MSEPEIKVGKTSSALFDRAPMAPSMPGGRASSSHGL) are disordered. Positions 61-312 (HHYFARMHXX…MRHCQQCRAD (252 aa)) constitute a Radical SAM core domain. [4Fe-4S] cluster contacts are provided by C75 and C79. Residue Y81 coordinates S-adenosyl-L-methionine. C82 lines the [4Fe-4S] cluster pocket. 3 residues coordinate S-adenosyl-L-methionine: G129, T181, and I233. [4Fe-4S] cluster-binding residues include C306 and C309.

Belongs to the radical SAM superfamily. NifB family. [4Fe-4S] cluster serves as cofactor.

The protein operates within cofactor biosynthesis; Fe-Mo cofactor biosynthesis. Functionally, involved in the biosynthesis of the iron-molybdenum cofactor (FeMo-co or M-cluster) found in the dinitrogenase enzyme of the nitrogenase complex in nitrogen-fixing microorganisms. Catalyzes the crucial step of radical SAM-dependent carbide insertion that occurs concomitant with the insertion of a 9th sulfur and the rearrangement/coupling of two [4Fe-4S] clusters into a [8Fe-9S-C] cluster, the precursor to the M-cluster. The sequence is that of FeMo cofactor biosynthesis protein FixZ (fixZ) from Rhizobium leguminosarum.